Consider the following 467-residue polypeptide: Asparagine--tRNA ligase (467 aa).

Belongs to the class-II aminoacyl-tRNA synthetase family. As to quaternary structure, homodimer.

Its subcellular location is the cytoplasm. The enzyme catalyses tRNA(Asn) + L-asparagine + ATP = L-asparaginyl-tRNA(Asn) + AMP + diphosphate + H(+). The sequence is that of Asparagine--tRNA ligase from Protochlamydia amoebophila (strain UWE25).